The chain runs to 100 residues: MKITQEEVTHVANLSKLRFSEEETAAFATTLSKIVDMVELLGEVDTTGVAPTTTMADRKTVLRPDVAEEGTDRDRLFKNVPEQDNYYIKVPAILDDGGDA.

It belongs to the GatC family. In terms of assembly, heterotrimer of A, B and C subunits.

It carries out the reaction L-glutamyl-tRNA(Gln) + L-glutamine + ATP + H2O = L-glutaminyl-tRNA(Gln) + L-glutamate + ADP + phosphate + H(+). The catalysed reaction is L-aspartyl-tRNA(Asn) + L-glutamine + ATP + H2O = L-asparaginyl-tRNA(Asn) + L-glutamate + ADP + phosphate + 2 H(+). Allows the formation of correctly charged Asn-tRNA(Asn) or Gln-tRNA(Gln) through the transamidation of misacylated Asp-tRNA(Asn) or Glu-tRNA(Gln) in organisms which lack either or both of asparaginyl-tRNA or glutaminyl-tRNA synthetases. The reaction takes place in the presence of glutamine and ATP through an activated phospho-Asp-tRNA(Asn) or phospho-Glu-tRNA(Gln). The chain is Aspartyl/glutamyl-tRNA(Asn/Gln) amidotransferase subunit C from Streptococcus pneumoniae (strain JJA).